The primary structure comprises 321 residues: Lipoyl synthase (321 aa).

Positions 68, 73, 79, 94, 98, 101, and 308 each coordinate [4Fe-4S] cluster. The region spanning 80-297 is the Radical SAM core domain; the sequence is FNHGTATFMI…KEIALELGFT (218 aa).

The protein belongs to the radical SAM superfamily. Lipoyl synthase family. The cofactor is [4Fe-4S] cluster.

It localises to the cytoplasm. The enzyme catalyses [[Fe-S] cluster scaffold protein carrying a second [4Fe-4S](2+) cluster] + N(6)-octanoyl-L-lysyl-[protein] + 2 oxidized [2Fe-2S]-[ferredoxin] + 2 S-adenosyl-L-methionine + 4 H(+) = [[Fe-S] cluster scaffold protein] + N(6)-[(R)-dihydrolipoyl]-L-lysyl-[protein] + 4 Fe(3+) + 2 hydrogen sulfide + 2 5'-deoxyadenosine + 2 L-methionine + 2 reduced [2Fe-2S]-[ferredoxin]. It functions in the pathway protein modification; protein lipoylation via endogenous pathway; protein N(6)-(lipoyl)lysine from octanoyl-[acyl-carrier-protein]: step 2/2. In terms of biological role, catalyzes the radical-mediated insertion of two sulfur atoms into the C-6 and C-8 positions of the octanoyl moiety bound to the lipoyl domains of lipoate-dependent enzymes, thereby converting the octanoylated domains into lipoylated derivatives. This chain is Lipoyl synthase, found in Aliivibrio fischeri (strain ATCC 700601 / ES114) (Vibrio fischeri).